The sequence spans 519 residues: PTS system mannitol-specific EIICB component (519 aa).

Residues 1 to 30 are Cytoplasmic-facing; that stretch reads MAQTETQEKKGLGRKVQAFGSFLSSMIMPN. Residues 19–351 form the PTS EIIC type-2 domain; that stretch reads FGSFLSSMIM…MKFTKEPKQD (333 aa). A helical membrane pass occupies residues 31–52; that stretch reads IGAFIAWGFIAAIFIDNGWYPN. At 53-56 the chain is on the extracellular side; the sequence is KELS. The helical transmembrane segment at 57–77 threads the bilayer; that stretch reads QLAGPMITYLIPLLIAFSGGR. Over 78–141 the chain is Cytoplasmic; it reads LIHDLRGGIV…QGFEMLFNNF (64 aa). Residues 142–163 form a helical membrane-spanning segment; that stretch reads SAGILAFIMTILGFKLLAPIMQ. Residues 164 to 172 are Extracellular-facing; that stretch reads FIMHILSVA. Residues 173–193 traverse the membrane as a helical segment; it reads VEFLVHLHLLPIVSIIVEPAK. Over 194–280 the chain is Cytoplasmic; that stretch reads ILFLNNAINH…VLMRPLLFIA (87 aa). A helical membrane pass occupies residues 281–300; that stretch reads VILGGMTGVATYQATGFGFK. Topologically, residues 301 to 320 are extracellular; that stretch reads SPASPGSFIVYCLNAPKGEF. Residues 321–342 traverse the membrane as a helical segment; it reads LHMVLGVFLAALVSFVVAALIM. Residues 343-519 are Cytoplasmic-facing; it reads KFTKEPKQDL…NNLKKDQDKA (177 aa). Residues 366–406 form a disordered region; that stretch reads KSSVSSKLTGATTGTGAAGVAANKANGEDQNEASSEDEEED. Residues 367–387 are compositionally biased toward low complexity; it reads SSVSSKLTGATTGTGAAGVAA. The span at 394–406 shows a compositional bias: acidic residues; that stretch reads DQNEASSEDEEED. A PTS EIIB type-2 domain is found at 425–519; the sequence is DHVIFACDAG…NNLKKDQDKA (95 aa). Residue C431 is the Phosphocysteine intermediate; for EIIB activity of the active site. At C431 the chain carries Phosphocysteine; by EIIA.

Homodimer.

The protein localises to the cell membrane. It catalyses the reaction D-mannitol(out) + N(pros)-phospho-L-histidyl-[protein] = D-mannitol 1-phosphate(in) + L-histidyl-[protein]. Its function is as follows. The phosphoenolpyruvate-dependent sugar phosphotransferase system (sugar PTS), a major carbohydrate active transport system, catalyzes the phosphorylation of incoming sugar substrates concomitantly with their translocation across the cell membrane. The enzyme II CmtAB PTS system is involved in D-mannitol transport. The chain is PTS system mannitol-specific EIICB component (mtlA) from Staphylococcus haemolyticus (strain JCSC1435).